Consider the following 150-residue polypeptide: MNKTSVPSIDSIDRQWYLVDAENQTLGRLATEVASVLRGKNKASFTPHLDTGDFVVVVNADKIRVSGNKPQQKLYRRHSGRPGGMKVETFTHLQERLPERIVEKAIKGMLPHNALGRQMFRKLKVYKGAEHPHAAQQPKPLQLDPAATAQ.

The segment at 129 to 150 (AEHPHAAQQPKPLQLDPAATAQ) is disordered.

This sequence belongs to the universal ribosomal protein uL13 family. In terms of assembly, part of the 50S ribosomal subunit.

This protein is one of the early assembly proteins of the 50S ribosomal subunit, although it is not seen to bind rRNA by itself. It is important during the early stages of 50S assembly. This Synechococcus sp. (strain WH7803) protein is Large ribosomal subunit protein uL13.